The chain runs to 251 residues: uncharacterized protein (251 aa).

The protein belongs to the FAM243 family.

This is an uncharacterized protein from Mus musculus (Mouse).